The sequence spans 179 residues: Large ribosomal subunit protein uL5 (179 aa).

This sequence belongs to the universal ribosomal protein uL5 family. As to quaternary structure, part of the 50S ribosomal subunit; part of the 5S rRNA/L5/L18/L25 subcomplex. Contacts the 5S rRNA and the P site tRNA. Forms a bridge to the 30S subunit in the 70S ribosome.

Its function is as follows. This is one of the proteins that bind and probably mediate the attachment of the 5S RNA into the large ribosomal subunit, where it forms part of the central protuberance. In the 70S ribosome it contacts protein S13 of the 30S subunit (bridge B1b), connecting the 2 subunits; this bridge is implicated in subunit movement. Contacts the P site tRNA; the 5S rRNA and some of its associated proteins might help stabilize positioning of ribosome-bound tRNAs. The polypeptide is Large ribosomal subunit protein uL5 (Salmonella arizonae (strain ATCC BAA-731 / CDC346-86 / RSK2980)).